A 1410-amino-acid chain; its full sequence is ABC transporter C family member 13 (1410 aa).

Helical transmembrane passes span 23–43 (IVLG…LTIT), 60–80 (LLYV…VLLV), 88–108 (VILC…ILSL), 122–142 (ILCF…NMIF), 148–168 (QEIC…VLRI), 391–411 (LSGL…SVLI), 474–494 (VFFW…LFAL), and 505–525 (FTCL…PWVI). In terms of domain architecture, ABC transmembrane type-1 1 spans 255–530 (CNNYSTPSLI…FPWVINGLID (276 aa)). The 228-residue stretch at 564–791 (VCVEDASCTW…ISPTFSLTNE (228 aa)) folds into the ABC transporter 1 domain. Residue 602–609 (GEVGSGKT) participates in ATP binding. 6 helical membrane-spanning segments follow: residues 844–864 (AVFS…LMQG), 889–909 (TSFY…LTLV), 963–985 (SLPF…IVVL), 990–1009 (VLFL…LQVF), 1087–1107 (IVLF…PISF), and 1111–1131 (GLVG…GSLL). The ABC transmembrane type-1 2 domain maps to 852 to 1139 (TIVILVSAVL…LLTSFTETEK (288 aa)). The 234-residue stretch at 1174 to 1407 (VEFHNVTMRY…DSSTFSSFVR (234 aa)) folds into the ABC transporter 2 domain. 1208 to 1215 (GRTGAGKS) is a binding site for ATP.

This sequence belongs to the ABC transporter superfamily. ABCC family. Conjugate transporter (TC 3.A.1.208) subfamily. As to expression, ubiquitous.

It localises to the membrane. The enzyme catalyses ATP + H2O + xenobioticSide 1 = ADP + phosphate + xenobioticSide 2.. In terms of biological role, pump for glutathione S-conjugates. In Arabidopsis thaliana (Mouse-ear cress), this protein is ABC transporter C family member 13 (ABCC13).